The following is a 520-amino-acid chain: Peptide chain release factor 3 (520 aa).

The tr-type G domain occupies 8–277; sequence ESRKTFAIIS…FAPMPNARQT (270 aa). GTP contacts are provided by residues 17–24, 85–89, and 139–142; these read SHPDAGKT, DTPGH, and NKLD.

Belongs to the TRAFAC class translation factor GTPase superfamily. Classic translation factor GTPase family. PrfC subfamily.

It localises to the cytoplasm. In terms of biological role, increases the formation of ribosomal termination complexes and stimulates activities of RF-1 and RF-2. It binds guanine nucleotides and has strong preference for UGA stop codons. It may interact directly with the ribosome. The stimulation of RF-1 and RF-2 is significantly reduced by GTP and GDP, but not by GMP. The chain is Peptide chain release factor 3 from Staphylococcus aureus (strain JH1).